The primary structure comprises 511 residues: Probable lipid II flippase MurJ (511 aa).

Transmembrane regions (helical) follow at residues 25 to 45 (DILIASIFGASMFTDAFFISF), 85 to 105 (SSILGFMSFFLLLLTILGGFF), 133 to 153 (IMFPYILLISLSSLCSSILNS), 156 to 178 (YFSIPAFSPIFLNISIIFFSVFF), 245 to 265 (ISLIINTIFSSLLNSGSISWI), 271 to 291 (LIEFPVGILGVSLSTVLFTSL), 315 to 335 (LIVSLPGSVILFFLAKPVIIV), 356 to 376 (LYSCGLISFIFVKILSSAFYA), 400 to 420 (FLIFYFQHAGIALSLSITSWV), 442 to 462 (FIFIIYIILATLVMIVILFVV), and 481 to 501 (LFFGKYVSGITYLFMMNILGI).

This sequence belongs to the MurJ/MviN family.

Its subcellular location is the cell inner membrane. Its pathway is cell wall biogenesis; peptidoglycan biosynthesis. In terms of biological role, involved in peptidoglycan biosynthesis. Transports lipid-linked peptidoglycan precursors from the inner to the outer leaflet of the cytoplasmic membrane. The sequence is that of Probable lipid II flippase MurJ from Buchnera aphidicola subsp. Acyrthosiphon pisum (strain APS) (Acyrthosiphon pisum symbiotic bacterium).